Here is a 61-residue protein sequence, read N- to C-terminus: Small ribosomal subunit protein uS14 (61 aa).

4 residues coordinate Zn(2+): Cys24, Cys27, Cys40, and Cys43.

Belongs to the universal ribosomal protein uS14 family. Zinc-binding uS14 subfamily. In terms of assembly, part of the 30S ribosomal subunit. Contacts proteins S3 and S10. Zn(2+) is required as a cofactor.

Its function is as follows. Binds 16S rRNA, required for the assembly of 30S particles and may also be responsible for determining the conformation of the 16S rRNA at the A site. This chain is Small ribosomal subunit protein uS14, found in Anaeromyxobacter sp. (strain Fw109-5).